The primary structure comprises 275 residues: Dermonecrotic toxin SpeSicTox-betaIIA3ii (275 aa).

H5 is a catalytic residue. Mg(2+) contacts are provided by E25 and D27. The active-site Nucleophile is H41. Cystine bridges form between C45–C51 and C47–C190. D85 lines the Mg(2+) pocket.

It belongs to the arthropod phospholipase D family. Class II subfamily. It depends on Mg(2+) as a cofactor. In terms of tissue distribution, expressed by the venom gland.

The protein resides in the secreted. It catalyses the reaction an N-(acyl)-sphingosylphosphocholine = an N-(acyl)-sphingosyl-1,3-cyclic phosphate + choline. It carries out the reaction an N-(acyl)-sphingosylphosphoethanolamine = an N-(acyl)-sphingosyl-1,3-cyclic phosphate + ethanolamine. The catalysed reaction is a 1-acyl-sn-glycero-3-phosphocholine = a 1-acyl-sn-glycero-2,3-cyclic phosphate + choline. The enzyme catalyses a 1-acyl-sn-glycero-3-phosphoethanolamine = a 1-acyl-sn-glycero-2,3-cyclic phosphate + ethanolamine. Functionally, dermonecrotic toxins cleave the phosphodiester linkage between the phosphate and headgroup of certain phospholipids (sphingolipid and lysolipid substrates), forming an alcohol (often choline) and a cyclic phosphate. This toxin acts on sphingomyelin (SM). It may also act on ceramide phosphoethanolamine (CPE), lysophosphatidylcholine (LPC) and lysophosphatidylethanolamine (LPE), but not on lysophosphatidylserine (LPS), and lysophosphatidylglycerol (LPG). It acts by transphosphatidylation, releasing exclusively cyclic phosphate products as second products. Induces dermonecrosis, hemolysis, increased vascular permeability, edema, inflammatory response, and platelet aggregation. This chain is Dermonecrotic toxin SpeSicTox-betaIIA3ii, found in Sicarius peruensis (Six-eyed sand spider).